The following is a 329-amino-acid chain: DNA-directed RNA polymerase subunit alpha (329 aa).

Positions 1–235 (MQGFVEDFLK…QQLEAFVDLR (235 aa)) are alpha N-terminal domain (alpha-NTD). Residues 249-329 (FEPVLLRPVD…NWPPKSLLED (81 aa)) form an alpha C-terminal domain (alpha-CTD) region.

Belongs to the RNA polymerase alpha chain family. As to quaternary structure, homodimer. The RNAP catalytic core consists of 2 alpha, 1 beta, 1 beta' and 1 omega subunit. When a sigma factor is associated with the core the holoenzyme is formed, which can initiate transcription.

It carries out the reaction RNA(n) + a ribonucleoside 5'-triphosphate = RNA(n+1) + diphosphate. In terms of biological role, DNA-dependent RNA polymerase catalyzes the transcription of DNA into RNA using the four ribonucleoside triphosphates as substrates. This chain is DNA-directed RNA polymerase subunit alpha, found in Buchnera aphidicola subsp. Cinara cedri (strain Cc).